Consider the following 128-residue polypeptide: Mite group 2 allergen Gly d 2.01 (128 aa).

The protein belongs to the NPC2 family.

The protein localises to the secreted. This Glycyphagus domesticus (House itch mite) protein is Mite group 2 allergen Gly d 2.01.